The chain runs to 277 residues: MLSVAMGYVIAAFYRFVHLHNYYDMKPVILEFCLSRGIKGTVILAEQGINATIAGSRQSIGEFFSFLDSDDRLRGMKYHESHSDREPFAKMKVRLKREVVRLGIDGFDCSLRGEYIDPRDWDEFVSSPDVHVIDTRNDYEVRLGRFKGAIDPGTSSFREFPEWARNWALDKERDTCVAMYCTGGIRCEKSTAFMRSLGFRNVYHLRGGILNYLETVRGDDSLWEGECFVFDDRIAVDRNVSPSEDIKCIKCAGEVDASDLRSVSKGNIMCWDCRLQA.

Residues 126–221 (SSPDVHVIDT…YLETVRGDDS (96 aa)) form the Rhodanese domain. Catalysis depends on Cys-181, which acts as the Cysteine persulfide intermediate.

Belongs to the TrhO family.

The enzyme catalyses uridine(34) in tRNA + AH2 + O2 = 5-hydroxyuridine(34) in tRNA + A + H2O. Functionally, catalyzes oxygen-dependent 5-hydroxyuridine (ho5U) modification at position 34 in tRNAs. This is tRNA uridine(34) hydroxylase from Anaplasma marginale (strain Florida).